Reading from the N-terminus, the 201-residue chain is Peptide deformylase (201 aa).

Fe cation-binding residues include cysteine 121 and histidine 163. Glutamate 164 is a catalytic residue. Residue histidine 167 participates in Fe cation binding.

The protein belongs to the polypeptide deformylase family. Fe(2+) is required as a cofactor.

It catalyses the reaction N-terminal N-formyl-L-methionyl-[peptide] + H2O = N-terminal L-methionyl-[peptide] + formate. In terms of biological role, removes the formyl group from the N-terminal Met of newly synthesized proteins. Requires at least a dipeptide for an efficient rate of reaction. N-terminal L-methionine is a prerequisite for activity but the enzyme has broad specificity at other positions. This chain is Peptide deformylase, found in Synechococcus sp. (strain CC9902).